The following is a 542-amino-acid chain: Protein lin-9 homolog (542 aa).

Position 2 is an N-acetylalanine (alanine 2). Residues 2–296 (AELDQLPDES…QKQRPSRFFM (295 aa)) form a sufficient for interaction with RB1 region. A Glycyl lysine isopeptide (Lys-Gly) (interchain with G-Cter in SUMO2) cross-link involves residue lysine 21. Phosphoserine occurs at positions 65 and 95. Phosphothreonine is present on residues threonine 96 and threonine 304. Phosphoserine occurs at positions 309 and 321. Positions 354 to 413 (MIKKEHIKKLREMNTEAEKLKSYSMPISIEFQRRYATIVLELEQLNKDLNKVLHKVQQYC) form a coiled coil.

This sequence belongs to the lin-9 family. In terms of assembly, component of the DREAM complex (also named LINC complex) at least composed of E2F4, E2F5, LIN9, LIN37, LIN52, LIN54, MYBL1, MYBL2, RBL1, RBL2, RBBP4, TFDP1 and TFDP2. The complex exists in quiescent cells where it represses cell cycle-dependent genes. It dissociates in S phase when LIN9, LIN37, LIN52 and LIN54 form a subcomplex that binds to MYBL2. Interacts with RB1. As to expression, expressed in thymus and testis.

Its subcellular location is the nucleus. The protein resides in the nucleoplasm. Its function is as follows. Acts as a tumor suppressor. Inhibits DNA synthesis. Its ability to inhibit oncogenic transformation is mediated through its association with RB1. Plays a role in the expression of genes required for the G1/S transition. The chain is Protein lin-9 homolog (LIN9) from Homo sapiens (Human).